We begin with the raw amino-acid sequence, 250 residues long: Cruxrhodopsin-1 (250 aa).

Topologically, residues 1 to 9 (MPEPGSEAI) are extracellular. Residues 10–27 (WLWLGTAGMFLGMLYFIA) traverse the membrane as a helical segment. At 28–41 (RGWGETDSRRQKFY) the chain is on the cytoplasmic side. The helical transmembrane segment at 42-60 (IATILITAIAFVNYLAMAL) threads the bilayer. Residues 61-77 (GFGLTIVEFAGEEHPIY) are Extracellular-facing. Residues 78 to 94 (WARYSDWLFTTPLLLYD) traverse the membrane as a helical segment. The Cytoplasmic portion of the chain corresponds to 95–105 (LGLLAGADRNT). Residues 106 to 125 (ITSLVSLDVLMIGTGLVATL) traverse the membrane as a helical segment. Topologically, residues 126–138 (SPGSGVLSAGAER) are extracellular. Residues 139–158 (LVWWGISTAFLLVLLYFLFS) traverse the membrane as a helical segment. Over 159-176 (SLSGRVADLPSDTRSTFK) the chain is Cytoplasmic. A helical membrane pass occupies residues 177–195 (TLRNLVTVVWLVYPVWWLI). The Extracellular portion of the chain corresponds to 196–207 (GTEGIGLVGIGI). A helical transmembrane segment spans residues 208–227 (ETAGFMVIDLTAKVGFGIIL). Residue Lys-220 is modified to N6-(retinylidene)lysine. Residues 228-250 (LRSHGVLDGAAETTGTGATPADD) lie on the Cytoplasmic side of the membrane.

Belongs to the archaeal/bacterial/fungal opsin family. Homotrimer.

It localises to the cell membrane. Its function is as follows. Light-driven proton pump. The protein is Cruxrhodopsin-1 (cop1) of Haloarcula argentinensis.